Reading from the N-terminus, the 289-residue chain is Rhodopsin (289 aa).

The Extracellular segment spans residues Y1–A7. The chain crosses the membrane as a helical span at residues Y8–V32. Over T33–N44 the chain is Cytoplasmic. Residues Y45–Y67 traverse the membrane as a helical segment. The Extracellular portion of the chain corresponds to T68–C81. An intrachain disulfide couples C81 to C158. A helical transmembrane segment spans residues N82 to I104. The 'Ionic lock' involved in activated form stabilization signature appears at E105 to W107. Over E105–N123 the chain is Cytoplasmic. The chain crosses the membrane as a helical span at residues A124–V144. Residues G145–S173 lie on the Extracellular side of the membrane. A glycan (N-linked (GlcNAc...) asparagine) is linked at N171. A helical transmembrane segment spans residues F174–G195. Residues R196–R223 are Cytoplasmic-facing. The helical transmembrane segment at M224–W245 threads the bilayer. Over I246–I257 the chain is Extracellular. The helical transmembrane segment at F258–C279 threads the bilayer. N6-(retinylidene)lysine is present on K267. Over M280 to I289 the chain is Cytoplasmic.

This sequence belongs to the G-protein coupled receptor 1 family. Opsin subfamily. Phosphorylated on some or all of the serine and threonine residues present in the C-terminal region. In terms of processing, contains one covalently linked retinal chromophore.

It localises to the membrane. The protein localises to the cell projection. Its subcellular location is the cilium. The protein resides in the photoreceptor outer segment. In terms of biological role, photoreceptor required for image-forming vision at low light intensity. While most salt water fish species use retinal as chromophore, most freshwater fish use 3-dehydroretinal, or a mixture of retinal and 3-dehydroretinal. Light-induced isomerization of 11-cis to all-trans retinal triggers a conformational change that activates signaling via G-proteins. Subsequent receptor phosphorylation mediates displacement of the bound G-protein alpha subunit by arrestin and terminates signaling. In Batrachocottus nikolskii (Fat sculpin), this protein is Rhodopsin (rho).